Consider the following 118-residue polypeptide: Putative pterin-4-alpha-carbinolamine dehydratase (118 aa).

It belongs to the pterin-4-alpha-carbinolamine dehydratase family.

The catalysed reaction is (4aS,6R)-4a-hydroxy-L-erythro-5,6,7,8-tetrahydrobiopterin = (6R)-L-erythro-6,7-dihydrobiopterin + H2O. The sequence is that of Putative pterin-4-alpha-carbinolamine dehydratase from Xanthomonas oryzae pv. oryzae (strain PXO99A).